Reading from the N-terminus, the 189-residue chain is Parkinson disease protein 7 homolog (189 aa).

Residues C46 and C53 are each lipidated (S-palmitoyl cysteine). Phosphotyrosine is present on Y67. C106 carries S-palmitoyl cysteine lipidation. The Nucleophile role is filled by C106. At C106 the chain carries Cysteine sulfinic acid (-SO2H). C106 bears the Cysteine sulfinic acid (-SO2H); alternate mark. A lipid anchor (S-palmitoyl cysteine; alternate) is attached at C106. Residue H126 is part of the active site. K130 participates in a covalent cross-link: Glycyl lysine isopeptide (Lys-Gly) (interchain with G-Cter in SUMO). At K148 the chain carries N6-acetyllysine. K182 is subject to N6-succinyllysine.

This sequence belongs to the peptidase C56 family. Homodimer. The cofactor is Deglycase activity does not require glutathione as a cofactor, however, glycated glutathione constitutes a PARK7 substrate.. Post-translationally, sumoylated on Lys-130 by pias2 or pias4; which is essential for cell-growth promoting activity and transforming activity. In terms of processing, undergoes cleavage of a C-terminal peptide and subsequent activation of protease activity in response to oxidative stress. As to expression, larval brain and gut from 96 hours post-fertilization (hpf). Ubiquitous in adult; most abundant in brain, eye, heart and muscle. Within brain, neuronal expression is widespread, particularly in the cerebellum, medullary reticular formation and diencephalon. Expressed in major forebrain and diencephalic dopaminergic cell groups.

It localises to the cell membrane. The protein resides in the cytoplasm. The protein localises to the nucleus. It is found in the membrane raft. Its subcellular location is the mitochondrion. It localises to the endoplasmic reticulum. The enzyme catalyses N(omega)-(1-hydroxy-2-oxopropyl)-L-arginyl-[protein] + H2O = lactate + L-arginyl-[protein] + H(+). It catalyses the reaction N(6)-(1-hydroxy-2-oxopropyl)-L-lysyl-[protein] + H2O = lactate + L-lysyl-[protein] + H(+). The catalysed reaction is S-(1-hydroxy-2-oxopropyl)-L-cysteinyl-[protein] + H2O = lactate + L-cysteinyl-[protein] + H(+). It carries out the reaction N(omega)-(1-hydroxy-2-oxoethyl)-L-arginyl-[protein] + H2O = L-arginyl-[protein] + glycolate + H(+). The enzyme catalyses N(6)-(1-hydroxy-2-oxoethyl)-L-lysyl-[protein] + H2O = glycolate + L-lysyl-[protein] + H(+). It catalyses the reaction S-(1-hydroxy-2-oxoethyl)-L-cysteinyl-[protein] + H2O = glycolate + L-cysteinyl-[protein] + H(+). The catalysed reaction is N(2)-(1-hydroxy-2-oxopropyl)-dGTP + H2O = lactate + dGTP + H(+). It carries out the reaction N(2)-(1-hydroxy-2-oxopropyl)-GTP + H2O = lactate + GTP + H(+). The enzyme catalyses N(2)-(1-hydroxy-2-oxopropyl)-GDP + H2O = lactate + GDP + H(+). It catalyses the reaction N(2)-(1-hydroxy-2-oxopropyl)-GMP + H2O = lactate + GMP + H(+). The catalysed reaction is N(2)-(1-hydroxy-2-oxoethyl)-dGTP + H2O = dGTP + glycolate + H(+). It carries out the reaction N(2)-(1-hydroxy-2-oxoethyl)-GTP + H2O = glycolate + GTP + H(+). The enzyme catalyses N(2)-(1-hydroxy-2-oxoethyl)-GDP + H2O = glycolate + GDP + H(+). It catalyses the reaction N(2)-(1-hydroxy-2-oxoethyl)-GMP + H2O = glycolate + GMP + H(+). The catalysed reaction is an N(2)-(1-hydroxy-2-oxopropyl)-guanosine in RNA + H2O = a guanosine in RNA + lactate + H(+). It carries out the reaction an N(2)-(1-hydroxy-2-oxopropyl)-2'-deoxyguanosine in DNA + H2O = a 2'-deoxyguanosine in DNA + lactate + H(+). The enzyme catalyses an N(2)-(1-hydroxy-2-oxoethyl)-guanosine in RNA + H2O = a guanosine in RNA + glycolate + H(+). It catalyses the reaction an N(2)-(1-hydroxy-2-oxoethyl)-2'-deoxyguanosine in DNA + H2O = a 2'-deoxyguanosine in DNA + glycolate + H(+). Multifunctional protein with controversial molecular function which plays an important role in cell protection against oxidative stress and cell death acting as oxidative stress sensor and redox-sensitive chaperone and protease. It is involved in neuroprotective mechanisms like the stabilization of NFE2L2 and PINK1 proteins, male fertility as a positive regulator of androgen signaling pathway as well as cell growth and transformation through, for instance, the modulation of NF-kappa-B signaling pathway. Has been described as a protein and nucleotide deglycase that catalyzes the deglycation of the Maillard adducts formed between amino groups of proteins or nucleotides and reactive carbonyl groups of glyoxals. But this function is rebuted by other works. As a protein deglycase, repairs methylglyoxal- and glyoxal-glycated proteins, and releases repaired proteins and lactate or glycolate, respectively. Deglycates cysteine, arginine and lysine residues in proteins, and thus reactivates these proteins by reversing glycation by glyoxals. Acts on early glycation intermediates (hemithioacetals and aminocarbinols), preventing the formation of advanced glycation endproducts (AGE) that cause irreversible damage. Also functions as a nucleotide deglycase able to repair glycated guanine in the free nucleotide pool (GTP, GDP, GMP, dGTP) and in DNA and RNA. Is thus involved in a major nucleotide repair system named guanine glycation repair (GG repair), dedicated to reversing methylglyoxal and glyoxal damage via nucleotide sanitization and direct nucleic acid repair. Protects histones from adduction by methylglyoxal, controls the levels of methylglyoxal-derived argininine modifications on chromatin. Displays a very low glyoxalase activity that may reflect its deglycase activity. It is involved in neuroprotective mechanisms as well as cell growth and transformation. Its involvement in protein repair could also explain other unrelated functions. Eliminates hydrogen peroxide and protects cells against hydrogen peroxide-induced cell death. Required for correct mitochondrial morphology and function as well as for autophagy of dysfunctional mitochondria. Regulates astrocyte inflammatory responses, may modulate lipid rafts-dependent endocytosis in astrocytes and neuronal cells. Binds to a number of mRNAs containing multiple copies of GG or CC motifs and partially inhibits their translation but dissociates following oxidative stress. Metal-binding protein able to bind copper as well as toxic mercury ions, enhances the cell protection mechanism against induced metal toxicity. This Danio rerio (Zebrafish) protein is Parkinson disease protein 7 homolog.